The primary structure comprises 629 residues: tRNA uridine 5-carboxymethylaminomethyl modification enzyme MnmG (629 aa).

Residues 14-19 (GAGHAG), valine 126, and serine 181 contribute to the FAD site. 273–287 (GPRYCPSIEDKVVRF) contributes to the NAD(+) binding site. Glutamine 370 contributes to the FAD binding site.

Belongs to the MnmG family. In terms of assembly, homodimer. Heterotetramer of two MnmE and two MnmG subunits. FAD is required as a cofactor.

It localises to the cytoplasm. NAD-binding protein involved in the addition of a carboxymethylaminomethyl (cmnm) group at the wobble position (U34) of certain tRNAs, forming tRNA-cmnm(5)s(2)U34. The chain is tRNA uridine 5-carboxymethylaminomethyl modification enzyme MnmG from Bacillus cereus (strain ATCC 10987 / NRS 248).